We begin with the raw amino-acid sequence, 171 residues long: Small ribosomal subunit protein mS25 (171 aa).

This sequence belongs to the mitochondrion-specific ribosomal protein mS25 family. As to quaternary structure, component of the mitochondrial ribosome small subunit (28S) which comprises a 12S rRNA and about 30 distinct proteins.

The protein localises to the mitochondrion. The sequence is that of Small ribosomal subunit protein mS25 (Mrps25) from Rattus norvegicus (Rat).